Reading from the N-terminus, the 337-residue chain is Glyceraldehyde-3-phosphate dehydrogenase (337 aa).

Residues 12–13, aspartate 34, and arginine 79 each bind NAD(+); that span reads RI. D-glyceraldehyde 3-phosphate is bound by residues 150–152, threonine 181, 210–211, and arginine 233; these read SCT and TG. Residue cysteine 151 is the Nucleophile of the active site. Asparagine 315 lines the NAD(+) pocket.

Belongs to the glyceraldehyde-3-phosphate dehydrogenase family. Homotetramer.

Its subcellular location is the cytoplasm. The catalysed reaction is D-glyceraldehyde 3-phosphate + phosphate + NAD(+) = (2R)-3-phospho-glyceroyl phosphate + NADH + H(+). It participates in carbohydrate degradation; glycolysis; pyruvate from D-glyceraldehyde 3-phosphate: step 1/5. The polypeptide is Glyceraldehyde-3-phosphate dehydrogenase (GPD) (Podospora anserina (Pleurage anserina)).